Reading from the N-terminus, the 82-residue chain is Protein transport protein Sec61 subunit beta (82 aa).

Met-1 carries the N-acetylmethionine modification. The disordered stretch occupies residues 1–34 (MVGSGAPQRGSAAATASMRRRKPTSGAGGGGASG). Topologically, residues 1-55 (MVGSGAPQRGSAAATASMRRRKPTSGAGGGGASGGAAGSMLQFYTDDAPGLKISP) are cytoplasmic. Residues 56 to 76 (NVVLIMSIGFIAFVAVLHVMG) traverse the membrane as a helical segment.

This sequence belongs to the SEC61-beta family. In terms of assembly, heterotrimeric complex composed of SEC61-alpha, SEC61-beta and SEC61-gamma.

The protein localises to the endoplasmic reticulum membrane. Its function is as follows. Necessary for protein translocation in the endoplasmic reticulum. The chain is Protein transport protein Sec61 subunit beta from Arabidopsis thaliana (Mouse-ear cress).